A 365-amino-acid polypeptide reads, in one-letter code: Peridinin-chlorophyll a-binding protein, chloroplastic (365 aa).

Residues 1–52 (MVRGARKAIAVGVAVAVACGLQKHLNFVPGPRHAAPVAAAAASMMMAPAAFA) constitute a chloroplast transit peptide. 2 consecutive repeat copies span residues 53–215 (DEIG…VPSG) and 216–365 (DKIG…ASQR).

As to quaternary structure, monomer.

The protein localises to the plastid. It localises to the chloroplast. Its function is as follows. Water-soluble antenna for capture of solar energy in the blue-green range. Peridinin is an asymmetric carotenoid. This chain is Peridinin-chlorophyll a-binding protein, chloroplastic, found in Symbiodinium sp. (Dinoflagellate).